The primary structure comprises 428 residues: Glutamate-1-semialdehyde 2,1-aminomutase (428 aa).

Residue Lys-267 is modified to N6-(pyridoxal phosphate)lysine.

This sequence belongs to the class-III pyridoxal-phosphate-dependent aminotransferase family. HemL subfamily. In terms of assembly, homodimer. Pyridoxal 5'-phosphate is required as a cofactor.

It is found in the cytoplasm. It catalyses the reaction (S)-4-amino-5-oxopentanoate = 5-aminolevulinate. The protein operates within porphyrin-containing compound metabolism; protoporphyrin-IX biosynthesis; 5-aminolevulinate from L-glutamyl-tRNA(Glu): step 2/2. It participates in porphyrin-containing compound metabolism; chlorophyll biosynthesis. This is Glutamate-1-semialdehyde 2,1-aminomutase from Prochlorococcus marinus (strain MIT 9303).